The sequence spans 119 residues: Membrane-anchored ubiquitin-fold protein 6 (119 aa).

Residues 8–76 form the Ubiquitin-like domain; the sequence is IELKFRLADG…NNRTLAESRL (69 aa). C114 is lipidated: S-palmitoyl cysteine. C116 carries the post-translational modification Cysteine methyl ester. A lipid anchor (S-geranylgeranyl cysteine) is attached at C116. Positions 117 to 119 are cleaved as a propeptide — removed in mature form; sequence TIL.

As to expression, ubiquitous.

The protein resides in the cell membrane. Its function is as follows. May serve as docking site to facilitate the association of other proteins to the plasma membrane. This is Membrane-anchored ubiquitin-fold protein 6 (MUB6) from Arabidopsis thaliana (Mouse-ear cress).